The primary structure comprises 311 residues: Methionyl-tRNA formyltransferase (311 aa).

110-113 (SLLP) lines the (6S)-5,6,7,8-tetrahydrofolate pocket.

This sequence belongs to the Fmt family.

It carries out the reaction L-methionyl-tRNA(fMet) + (6R)-10-formyltetrahydrofolate = N-formyl-L-methionyl-tRNA(fMet) + (6S)-5,6,7,8-tetrahydrofolate + H(+). In terms of biological role, attaches a formyl group to the free amino group of methionyl-tRNA(fMet). The formyl group appears to play a dual role in the initiator identity of N-formylmethionyl-tRNA by promoting its recognition by IF2 and preventing the misappropriation of this tRNA by the elongation apparatus. This is Methionyl-tRNA formyltransferase from Streptococcus pyogenes serotype M28 (strain MGAS6180).